The chain runs to 155 residues: Transcriptional repressor NrdR (155 aa).

A zinc finger spans residues 3–34 (CPFCGHSSTQVLDSRVSEDGDTVRRRRRCEAC). The 91-residue stretch at 49 to 139 (PAIVKKNGSR…VYRSFEDVSE (91 aa)) folds into the ATP-cone domain.

This sequence belongs to the NrdR family. It depends on Zn(2+) as a cofactor.

Negatively regulates transcription of bacterial ribonucleotide reductase nrd genes and operons by binding to NrdR-boxes. The sequence is that of Transcriptional repressor NrdR from Cupriavidus metallidurans (strain ATCC 43123 / DSM 2839 / NBRC 102507 / CH34) (Ralstonia metallidurans).